The chain runs to 258 residues: Serine protease sp-Eoc49 (258 aa).

The N-terminal stretch at 1–18 (MVLIRVLANLLVLQLSYA) is a signal peptide. Residues 25–249 (VVGGGECNRN…YTDWIQSIIA (225 aa)) enclose the Peptidase S1 domain. Asparagine 44 carries an N-linked (GlcNAc...) asparagine glycan. A disulfide bridge links cysteine 50 with cysteine 66. Histidine 65 acts as the Charge relay system in catalysis. Residues asparagine 79 and asparagine 103 are each glycosylated (N-linked (GlcNAc...) asparagine). Aspartate 110 serves as the catalytic Charge relay system. Cystine bridges form between cysteine 142-cysteine 210, cysteine 174-cysteine 189, and cysteine 200-cysteine 225. An N-linked (GlcNAc...) asparagine glycan is attached at asparagine 154. Serine 204 acts as the Charge relay system in catalysis. N-linked (GlcNAc...) asparagine glycosylation is present at asparagine 251.

The protein belongs to the peptidase S1 family. Snake venom subfamily. As to quaternary structure, monomer. In terms of tissue distribution, expressed by the venom gland.

The protein resides in the secreted. In terms of biological role, snake venom serine protease that may act in the hemostasis system of the prey. This is Serine protease sp-Eoc49 from Echis ocellatus (Ocellated saw-scaled viper).